A 688-amino-acid chain; its full sequence is Sialic acid-binding Ig-like lectin 10 (688 aa).

A signal peptide spans 1–17; it reads MSLLLFLLSFLLDGPQG. Topologically, residues 18–543 are extracellular; that stretch reads QMESYFLQVQ…DKDSATAFSK (526 aa). The 113-residue stretch at 26–138 folds into the Ig-like V-type domain; the sequence is VQRIVKAQEG…SFKEEFRLQV (113 aa). Cystine bridges form between Cys-37–Cys-172, Cys-42–Cys-102, and Cys-163–Cys-214. N-acetylneuraminate is bound at residue Arg-120. Positions 145–228 constitute an Ig-like C2-type 1 domain; the sequence is PDIFIPEVLE…SRMSTQRTVR (84 aa). N-linked (GlcNAc...) asparagine glycosylation is found at Asn-195 and Asn-246. Ig-like C2-type domains follow at residues 250-334 and 339-436; these read PDLH…LDLS and PQDL…LSLS. Intrachain disulfides connect Cys-271–Cys-318 and Cys-375–Cys-420. The chain crosses the membrane as a helical span at residues 544-564; the sequence is GAVLGFGITALLALCLIVVIV. Topologically, residues 565 to 688 are cytoplasmic; that stretch reads KTLQKKGTQE…YSDYTEVRVH (124 aa). Positions 588–593 match the ITIM motif 1 motif; the sequence is LDYINV. Residues 602 to 656 form a disordered region; sequence RNWKAEPDAPSRSSPLDTHFPKPKKKQKDPHFTYPGCPDPTSSSQVPVSENNPEE. The span at 641-652 shows a compositional bias: polar residues; it reads PTSSSQVPVSEN. The ITIM motif 2 motif lies at 657-662; it reads LHYAAL. Tyr-659 is subject to Phosphotyrosine.

This sequence belongs to the immunoglobulin superfamily. SIGLEC (sialic acid binding Ig-like lectin) family. As to quaternary structure, interacts with PTPN6/SHP-1 upon phosphorylation. Interacts with NCF1. Interacts with CD24; the probable CD24:SIGLEC10 complex is proposed to inhibit HGMB1-mediated tissue damage immune response. Interacts with HMGB1; the interaction is dependent on CD24. Associates with membrane IgM on the B cell surface. Interacts with RIGI, CBL and PTPN11. Phosphorylation of Tyr-659 is involved in binding to PTPN6. Expressed in B cells with high levels in pre-B cells and B1a cells of the peritoneal cavity.

The protein resides in the cell membrane. Functionally, putative adhesion molecule that mediates sialic-acid dependent binding to cells. Preferentially binds to alpha-2,3- or alpha-2,6-linked sialic acid. The sialic acid recognition site may be masked by cis interactions with sialic acids on the same cell surface. In the immune response, seems to act as an inhibitory receptor upon ligand induced tyrosine phosphorylation by recruiting cytoplasmic phosphatase(s) via their SH2 domain(s) that block signal transduction through dephosphorylation of signaling molecules. Involved in negative regulation of B-cell antigen receptor signaling and specifically acts on B1 cells to inhibit Ca(2+) signaling, cellular expansion and antibody secretion. The inhibition of B cell activation is dependent on PTPN6/SHP-1. In association with CD24 may be involved in the selective suppression of the immune response to danger-associated molecular patterns (DAMPs) such as HMGB1, HSP70 and HSP90. In association with CD24 may regulate the immune repsonse of natural killer (NK) cells. Plays a role in the control of autoimmunity. During initiation of adaptive immune responses by CD8-alpha(+) dendritic cells inhibits cross-presentation by impairing the formation of MHC class I-peptide complexes. The function seems to implicate recruitment of PTPN6/SHP-1, which dephosphorylates NCF1 of the NADPH oxidase complex consequently promoting phagosomal acidification. (Microbial infection) During infection by RNA viruses inhibits RIG-I signaling in macrophages by promoting its CBL-dependent ubiquitination and degradation via PTPN11/SHP-2. This is Sialic acid-binding Ig-like lectin 10 (Siglec10) from Mus musculus (Mouse).